A 404-amino-acid chain; its full sequence is MTLDATPIIKSLLDTDAYKLHMQQAVYHRYSHMPVVAEFRCRGDELLGEYATELRHQVNMMADLALTDAEFNYLSSLPFFKADYLDWLKTFRFNPQQVNISVTNGGQLAIHISGLWYEVIMWEVPLLALISELIHRHHSPDNTVENAVNQLRKLIKLFYQHAENEGIDLSSFKLMDFGTRRRFSHRVQHAVVSELQQHFPYLIGTSNYQLAQQLGLPPVGTQAHEWFQAHQQISPDLASSQREALQSWLKEYPNQLGIALTDCITMDAFLRDFDAQFAKNYQGLRHDSGDPVQWGEKAIAHYQKLGIDPMTKTLVFSDSLDFQKALALYRHFHNRINLIFGIGTQLTCNIPGVKPLNIVIKLVECNGKPVAKLSDSPGKTICEDNEFVNRLRAAFDIPQVKQAC.

Residue His224 is modified to Phosphohistidine; by autocatalysis.

It belongs to the NAPRTase family. In terms of processing, transiently phosphorylated on a His residue during the reaction cycle. Phosphorylation strongly increases the affinity for substrates and increases the rate of nicotinate D-ribonucleotide production. Dephosphorylation regenerates the low-affinity form of the enzyme, leading to product release.

The enzyme catalyses nicotinate + 5-phospho-alpha-D-ribose 1-diphosphate + ATP + H2O = nicotinate beta-D-ribonucleotide + ADP + phosphate + diphosphate. It functions in the pathway cofactor biosynthesis; NAD(+) biosynthesis; nicotinate D-ribonucleotide from nicotinate: step 1/1. Its function is as follows. Catalyzes the synthesis of beta-nicotinate D-ribonucleotide from nicotinate and 5-phospho-D-ribose 1-phosphate at the expense of ATP. In Photorhabdus laumondii subsp. laumondii (strain DSM 15139 / CIP 105565 / TT01) (Photorhabdus luminescens subsp. laumondii), this protein is Nicotinate phosphoribosyltransferase.